The sequence spans 194 residues: Peptidyl-tRNA hydrolase (194 aa).

The active-site Proton acceptor is His22. 3 residues coordinate tRNA: Tyr67, Asn69, and Asn115.

This sequence belongs to the PTH family. As to quaternary structure, monomer.

Its subcellular location is the cytoplasm. It catalyses the reaction an N-acyl-L-alpha-aminoacyl-tRNA + H2O = an N-acyl-L-amino acid + a tRNA + H(+). Functionally, hydrolyzes ribosome-free peptidyl-tRNAs (with 1 or more amino acids incorporated), which drop off the ribosome during protein synthesis, or as a result of ribosome stalling. Catalyzes the release of premature peptidyl moieties from peptidyl-tRNA molecules trapped in stalled 50S ribosomal subunits, and thus maintains levels of free tRNAs and 50S ribosomes. The polypeptide is Peptidyl-tRNA hydrolase (Granulibacter bethesdensis (strain ATCC BAA-1260 / CGDNIH1)).